A 211-amino-acid polypeptide reads, in one-letter code: Troponin I, cardiac muscle (211 aa).

The segment at 1-25 is disordered; sequence MADESSDAAGEPQPAPAPVRRRSSA. Position 2 is an N-acetylalanine (A2). A phosphoserine mark is found at S5 and S6. 2 positions are modified to phosphoserine; by PKA and PKD/PRKD1: S23 and S24. Y27 carries the phosphotyrosine modification. T32 is modified (phosphothreonine; by STK4/MST1). Residues 33 to 80 are involved in binding TNC; it reads EPHAKKKSKISASRKLQLKTLMLQIAKQEMEREAEERRGEKGRVLSTR. 2 positions are modified to phosphoserine; by PKC/PRKCE: S43 and S45. T52 bears the Phosphothreonine; by STK4/MST1 mark. The residue at position 78 (S78) is a Phosphoserine. Residue T79 is modified to Phosphothreonine. Phosphothreonine; by STK4/MST1 occurs at positions 130 and 144. The interval 130–151 is involved in binding TNC and actin; sequence TQKIYDLRGKFKRPTLRRVRIS. S151 carries the post-translational modification Phosphoserine; by PAK3. Phosphoserine is present on residues S167 and S200.

The protein belongs to the troponin I family. As to quaternary structure, interacts with TRIM63. Binds to actin and tropomyosin. Interacts with STK4/MST1. Post-translationally, phosphorylated at Ser-23 and Ser-24 by PRKD1; phosphorylation reduces myofilament calcium sensitivity. Phosphorylated preferentially at Thr-32. Phosphorylation by STK4/MST1 alters its binding affinity to TNNC1 (cardiac Tn-C) and TNNT2 (cardiac Tn-T). Phosphorylated at Ser-43 and Ser-45 by PRKCE; phosphorylation increases myocardium contractile dysfunction.

Functionally, troponin I is the inhibitory subunit of troponin, the thin filament regulatory complex which confers calcium-sensitivity to striated muscle actomyosin ATPase activity. The polypeptide is Troponin I, cardiac muscle (Tnni3) (Rattus norvegicus (Rat)).